Here is a 189-residue protein sequence, read N- to C-terminus: UPF0149 protein VF_2102 (189 aa).

This sequence belongs to the UPF0149 family.

The chain is UPF0149 protein VF_2102 from Aliivibrio fischeri (strain ATCC 700601 / ES114) (Vibrio fischeri).